The sequence spans 105 residues: Nucleoid-associated protein ABC0038 (105 aa).

Positions 1–22 (MEMKNMGNMMKQMQKMQKQMMK) are enriched in low complexity. A disordered region spans residues 1-26 (MEMKNMGNMMKQMQKMQKQMMKAQEE).

This sequence belongs to the YbaB/EbfC family. Homodimer.

Its subcellular location is the cytoplasm. The protein resides in the nucleoid. Its function is as follows. Binds to DNA and alters its conformation. May be involved in regulation of gene expression, nucleoid organization and DNA protection. The sequence is that of Nucleoid-associated protein ABC0038 from Shouchella clausii (strain KSM-K16) (Alkalihalobacillus clausii).